The following is a 162-amino-acid chain: Caveolin-2 (162 aa).

Topologically, residues 1-86 (MGLETEKADV…FEISKYVMYK (86 aa)) are cytoplasmic. Tyrosine 19 is modified (phosphotyrosine; by SRC). Serine 20 and serine 23 each carry phosphoserine. The residue at position 27 (tyrosine 27) is a Phosphotyrosine; by SRC. The residue at position 36 (serine 36) is a Phosphoserine. Positions 87-107 (FLTVFLAIPLAFIAGILFATL) form an intramembrane region, helical. Residues 108–162 (SCLHIWILMPFVKTCLMVLPSVQTIWKSVTDVIIAPLCTSVGRSFSSVSLQLSQD) lie on the Cytoplasmic side of the membrane.

This sequence belongs to the caveolin family. As to quaternary structure, monomer or homodimer. Interacts with CAV1; the interaction forms a stable heterooligomeric complex that is required for targeting to lipid rafts and for caveolae formation. Tyrosine phosphorylated forms do not form heterooligomers with the Tyr-19-phosphorylated form existing as a monomer or dimer, and the Tyr-27-form as a monomer only. Interacts (tyrosine phosphorylated form) with the SH2 domain-containing proteins, RASA1, NCK1 and SRC. Interacts (tyrosine phosphorylated form) with INSR, the interaction (Tyr-27-phosphorylated form) is increased on insulin stimulation. Interacts (Tyr-19 phosphorylated form) with MAPK1 (phosphorylated form); the interaction, promoted by insulin, leads to nuclear location and MAPK1 activation. Interacts with STAT3; the interaction is increased on insulin-induced tyrosine phosphorylation leading to STAT activation. Phosphorylated on serine and tyrosine residues. CAV1 promotes phosphorylation on Ser-23 which then targets the complex to the plasma membrane, lipid rafts and caveolae. Phosphorylation on Ser-36 appears to modulate mitosis in endothelial cells. Phosphorylation on both Tyr-19 and Tyr-27 is required for insulin-induced 'Ser-727' phosphorylation of STAT3 and its activation. Phosphorylation on Tyr-19 is required for insulin-induced phosphorylation of MAPK1 and DNA binding of STAT3. Tyrosine phosphorylation is induced by both EGF and insulin (By. similarity).

Its subcellular location is the nucleus. The protein resides in the cytoplasm. It is found in the golgi apparatus membrane. The protein localises to the cell membrane. It localises to the membrane. Its subcellular location is the caveola. In terms of biological role, may act as a scaffolding protein within caveolar membranes. Interacts directly with G-protein alpha subunits and can functionally regulate their activity. Acts as an accessory protein in conjunction with CAV1 in targeting to lipid rafts and driving caveolae formation. The Ser-36 phosphorylated form has a role in modulating mitosis in endothelial cells. Positive regulator of cellular mitogenesis of the MAPK signaling pathway. Required for the insulin-stimulated nuclear translocation and activation of MAPK1 and STAT3, and the subsequent regulation of cell cycle progression. This is Caveolin-2 (CAV2) from Pongo abelii (Sumatran orangutan).